Here is a 237-residue protein sequence, read N- to C-terminus: 7-cyano-7-deazaguanine synthase (237 aa).

Residue 14–24 participates in ATP binding; it reads FSGGQDSATCL. Zn(2+) is bound by residues Cys-202, Cys-217, Cys-220, and Cys-223.

The protein belongs to the QueC family. Zn(2+) is required as a cofactor.

It carries out the reaction 7-carboxy-7-deazaguanine + NH4(+) + ATP = 7-cyano-7-deazaguanine + ADP + phosphate + H2O + H(+). Its pathway is purine metabolism; 7-cyano-7-deazaguanine biosynthesis. Functionally, catalyzes the ATP-dependent conversion of 7-carboxy-7-deazaguanine (CDG) to 7-cyano-7-deazaguanine (preQ(0)). This Rhodopseudomonas palustris (strain ATCC BAA-98 / CGA009) protein is 7-cyano-7-deazaguanine synthase.